The sequence spans 131 residues: Small ribosomal subunit protein uS11 (131 aa).

Belongs to the universal ribosomal protein uS11 family. As to quaternary structure, part of the 30S ribosomal subunit. Interacts with proteins S7 and S18. Binds to IF-3.

In terms of biological role, located on the platform of the 30S subunit, it bridges several disparate RNA helices of the 16S rRNA. Forms part of the Shine-Dalgarno cleft in the 70S ribosome. This Clostridium novyi (strain NT) protein is Small ribosomal subunit protein uS11.